The chain runs to 438 residues: UPF0597 protein YE0448 (438 aa).

Belongs to the UPF0597 family.

This chain is UPF0597 protein YE0448, found in Yersinia enterocolitica serotype O:8 / biotype 1B (strain NCTC 13174 / 8081).